Here is a 267-residue protein sequence, read N- to C-terminus: 2-keto-3-deoxy-L-rhamnonate aldolase (267 aa).

His-49 functions as the Proton acceptor in the catalytic mechanism. Gln-151 serves as a coordination point for substrate. Mg(2+) is bound at residue Glu-153. Residues Ala-178 and Asp-179 each contribute to the substrate site. Asp-179 contacts Mg(2+).

This sequence belongs to the HpcH/HpaI aldolase family. KDR aldolase subfamily. In terms of assembly, homohexamer. The cofactor is Mg(2+).

The catalysed reaction is 2-dehydro-3-deoxy-L-rhamnonate = (S)-lactaldehyde + pyruvate. Functionally, catalyzes the reversible retro-aldol cleavage of 2-keto-3-deoxy-L-rhamnonate (KDR) to pyruvate and lactaldehyde. The sequence is that of 2-keto-3-deoxy-L-rhamnonate aldolase from Klebsiella pneumoniae subsp. pneumoniae (strain ATCC 700721 / MGH 78578).